The sequence spans 203 residues: Galactoside O-acetyltransferase (203 aa).

Substrate-binding residues include D17, S71, N85, and D93. N85 is an acetyl-CoA binding site. The active-site Proton donor/acceptor is H115. Acetyl-CoA contacts are provided by residues S142, A160, T165–K166, R180, and R183.

Belongs to the transferase hexapeptide repeat family. As to quaternary structure, homotrimer. The N-terminus of this protein is heterogeneous because the initiator methionine is only partially cleaved.

Its subcellular location is the cytoplasm. It catalyses the reaction a beta-D-galactoside + acetyl-CoA = a 6-acetyl-beta-D-galactoside + CoA. Catalyzes the CoA-dependent transfer of an acetyl group to the 6-O-methyl position of a range of galactosides, glucosides, and lactosides. May assist cellular detoxification by acetylating non-metabolizable pyranosides, thereby preventing their reentry into the cell. The sequence is that of Galactoside O-acetyltransferase (lacA) from Escherichia coli (strain K12).